Here is a 504-residue protein sequence, read N- to C-terminus: Ribosomal protein uS12 methylthiotransferase RimO (504 aa).

An MTTase N-terminal domain is found at 21 to 131 (KRVGFISLGC…VMGHVRELLP (111 aa)). The [4Fe-4S] cluster site is built by cysteine 30, cysteine 66, cysteine 95, cysteine 186, cysteine 190, and cysteine 193. Residues 172-408 (LTPRHYAYVK…MEVAQRISTE (237 aa)) enclose the Radical SAM core domain. In terms of domain architecture, TRAM spans 411–487 (SEKVGRVMDV…EYDLFGEVIE (77 aa)).

It belongs to the methylthiotransferase family. RimO subfamily. Requires [4Fe-4S] cluster as cofactor.

The protein resides in the cytoplasm. The catalysed reaction is L-aspartate(89)-[ribosomal protein uS12]-hydrogen + (sulfur carrier)-SH + AH2 + 2 S-adenosyl-L-methionine = 3-methylsulfanyl-L-aspartate(89)-[ribosomal protein uS12]-hydrogen + (sulfur carrier)-H + 5'-deoxyadenosine + L-methionine + A + S-adenosyl-L-homocysteine + 2 H(+). Functionally, catalyzes the methylthiolation of an aspartic acid residue of ribosomal protein uS12. This chain is Ribosomal protein uS12 methylthiotransferase RimO, found in Deinococcus radiodurans (strain ATCC 13939 / DSM 20539 / JCM 16871 / CCUG 27074 / LMG 4051 / NBRC 15346 / NCIMB 9279 / VKM B-1422 / R1).